The sequence spans 120 residues: PE family protein PE10 (120 aa).

The disordered stretch occupies residues Gly29 to Asp59. The span at Ser40–Ser51 shows a compositional bias: low complexity.

The protein belongs to the mycobacterial PE family. As to quaternary structure, forms a complex with PE9. The complex interacts with human TLR4.

It localises to the secreted. The protein localises to the cell wall. In terms of biological role, together with PE9, induces macrophage apoptosis through human Toll-like receptor 4 (TLR4) signaling pathway. Interaction with TLR4 leads to increased levels of phospho-IRF-3, increase in the transcript levels of IFN-beta and pro-apoptotic genes, up-regulation of IL-10, down-regulation of IL-1b and enhanced levels of macrophage apoptosis. The sequence is that of PE family protein PE10 from Mycobacterium tuberculosis (strain ATCC 25618 / H37Rv).